A 271-amino-acid chain; its full sequence is Protein ABHD14A (271 aa).

The chain crosses the membrane as a helical; Signal-anchor for type II membrane protein span at residues 35 to 55; the sequence is VALLGLSLLLMLLLYVGLPGP. Asn67 is a glycosylation site (N-linked (GlcNAc...) asparagine). The active-site Charge relay system is the Ser171. Asn201 carries an N-linked (GlcNAc...) asparagine glycan. Active-site charge relay system residues include Asp222 and His249.

Belongs to the AB hydrolase superfamily. ABHD14 family.

The protein localises to the cytoplasm. The protein resides in the membrane. Its function is as follows. Possible role in granule neuron development. This chain is Protein ABHD14A, found in Homo sapiens (Human).